The primary structure comprises 82 residues: Small ribosomal subunit protein uS17 (82 aa).

It belongs to the universal ribosomal protein uS17 family. As to quaternary structure, part of the 30S ribosomal subunit.

In terms of biological role, one of the primary rRNA binding proteins, it binds specifically to the 5'-end of 16S ribosomal RNA. The polypeptide is Small ribosomal subunit protein uS17 (Shewanella frigidimarina (strain NCIMB 400)).